The chain runs to 218 residues: Peptide methionine sulfoxide reductase MsrA (218 aa).

Residue Cys-57 is part of the active site.

Belongs to the MsrA Met sulfoxide reductase family.

It carries out the reaction L-methionyl-[protein] + [thioredoxin]-disulfide + H2O = L-methionyl-(S)-S-oxide-[protein] + [thioredoxin]-dithiol. The catalysed reaction is [thioredoxin]-disulfide + L-methionine + H2O = L-methionine (S)-S-oxide + [thioredoxin]-dithiol. In terms of biological role, has an important function as a repair enzyme for proteins that have been inactivated by oxidation. Catalyzes the reversible oxidation-reduction of methionine sulfoxide in proteins to methionine. The polypeptide is Peptide methionine sulfoxide reductase MsrA (Brucella anthropi (Ochrobactrum anthropi)).